Consider the following 88-residue polypeptide: Small ribosomal subunit protein bS20 (88 aa).

Positions 1-28 (MANTSSAKKATRKIARRTAVNKSRRTQM) are disordered.

Its function is as follows. Binds directly to 16S ribosomal RNA. The polypeptide is Small ribosomal subunit protein bS20 (Rhodopseudomonas palustris (strain ATCC BAA-98 / CGA009)).